Here is a 556-residue protein sequence, read N- to C-terminus: Peptide chain release factor 3 (556 aa).

Residues 28-297 enclose the tr-type G domain; the sequence is QQRRNFAIIS…AFLDYALKPG (270 aa). Residues 37–44, 105–109, and 159–162 contribute to the GTP site; these read SHPDAGKT, DTPGH, and NKMD.

The protein belongs to the TRAFAC class translation factor GTPase superfamily. Classic translation factor GTPase family. PrfC subfamily.

Its subcellular location is the cytoplasm. Functionally, increases the formation of ribosomal termination complexes and stimulates activities of RF-1 and RF-2. It binds guanine nucleotides and has strong preference for UGA stop codons. It may interact directly with the ribosome. The stimulation of RF-1 and RF-2 is significantly reduced by GTP and GDP, but not by GMP. The sequence is that of Peptide chain release factor 3 from Synechococcus elongatus (strain ATCC 33912 / PCC 7942 / FACHB-805) (Anacystis nidulans R2).